The primary structure comprises 173 residues: Disulfide bond formation protein B (173 aa).

Residues 1–14 (MIEFLRRIAAHRLA) are Cytoplasmic-facing. A helical transmembrane segment spans residues 15-31 (WGLLAASALFLELSALF). Over 32–49 (FQYVLGLHPCVMCVYERL) the chain is Periplasmic. Cysteines 41 and 44 form a disulfide. A helical transmembrane segment spans residues 50–65 (AILGVLSAGLLGMVAP). At 66–72 (EKWYLRW) the chain is on the cytoplasmic side. A helical transmembrane segment spans residues 73–90 (SALLLWGYSAFRGLQLAL). Residues 91-145 (KHVDYQMNPSPFNVCSPFADFPSWAPLDQWLPWLFFPDGDCSEISWQFLSFSMPQ) are Periplasmic-facing. A disulfide bridge connects residues Cys-105 and Cys-131. A helical membrane pass occupies residues 146-164 (WLVAIFAAYLLVFVVVTIG). At 165–173 (NLVKGRCCS) the chain is on the cytoplasmic side.

Belongs to the DsbB family.

It is found in the cell inner membrane. Functionally, required for disulfide bond formation in some periplasmic proteins. Acts by oxidizing the DsbA protein. The polypeptide is Disulfide bond formation protein B (Aeromonas salmonicida (strain A449)).